We begin with the raw amino-acid sequence, 631 residues long: Alpha-dioxygenase 2 (631 aa).

Positions 1–20 are cleaved as a signal peptide; it reads MGFSPSSSWFLHPQLHHVVS. His157 contributes to the heme b binding site. The Proton acceptor role is filled by Tyr378. His381 contacts heme b. N-linked (GlcNAc...) asparagine glycosylation is present at Asn583.

It belongs to the peroxidase family. Heme b is required as a cofactor. Expressed in seedlings (cotyledons, young leaves, and hypocotyls), flowers, siliques and old leaves.

Functionally, alpha-dioxygenase that catalyzes the primary oxygenation of fatty acids into oxylipins. May be involved in the senescence process. This Arabidopsis thaliana (Mouse-ear cress) protein is Alpha-dioxygenase 2 (DOX2).